Consider the following 264-residue polypeptide: Cell cycle regulator CcrZ (264 aa).

Phe32, Trp70, and Gly73 together coordinate ATP. The short motif at 157 to 164 (HGDVRHSN) is the Brenner's motif [HXDhX3N] element. The active-site Proton acceptor is the Asp159. Positions 173–196 (IYLVDWDSVRLTDRMFDVAHMLCH) match the APH motif.

This sequence belongs to the aminoglycoside phosphotransferase family. In terms of assembly, monomer in solution. Interacts with DnaA (via domains I (1-82) and III (111-326)). Interacts with DnaB. Interacts with FtsZ; the interaction is direct and ensures correct localization during the cell cycle.

The protein resides in the cytoplasm. It carries out the reaction D-ribose + ATP = D-ribose 5-phosphate + ADP + H(+). The catalysed reaction is 2-deoxy-D-ribose + ATP = 2-deoxy-D-ribose 5-phosphate + ADP + H(+). Functionally, plays a role in cell cycle regulation and chromosome integrity. Activates DnaA-dependent chromosomal DNA replication initiation ensuring that the chromosome is replicated at the right time during the cell cycle. May regulate replication initiation through phosphorylation of a possible second messenger or metabolite, and by interacting with replication initiation proteins. Has ATPase activity with D-ribose and 2-deoxy-D-ribose in vitro, but not with choline. Involved in DNA damage response. This is Cell cycle regulator CcrZ from Streptococcus pneumoniae serotype 2 (strain D39 / NCTC 7466).